The chain runs to 134 residues: Crustacean hyperglycemic hormones isoform B (134 aa).

Positions 1-24 are cleaved as a signal peptide; it reads MFACRTLCLVVVMVASLGTSGVGG. At Q61 the chain carries Pyrrolidone carboxylic acid. A D-phenylalanine; in form CHH-B-II modification is found at F63. 3 cysteine pairs are disulfide-bonded: C67/C103, C83/C99, and C86/C112. The residue at position 132 (V132) is a Valine amide.

Belongs to the arthropod CHH/MIH/GIH/VIH hormone family. Stereoinversion of L-Phe (form CHH-B-I) to D-Phe (form CHH-B-II). As to expression, produced by the medulla terminalis X-organ in the eyestalks and transported to the sinus gland where they are stored and released. Present also in the ventral nervous system.

It is found in the secreted. Hormone found in the sinus gland of isopods and decapods which controls the blood sugar level. Has a secretagogue action over the amylase released from the midgut gland. May act as a stress hormone and may be involved in the control of molting and reproduction. The protein is Crustacean hyperglycemic hormones isoform B of Homarus americanus (American lobster).